The primary structure comprises 277 residues: uncharacterized protein (277 aa).

Gly32–Ser39 provides a ligand contact to ATP.

The protein belongs to the GLYK kinase family.

The protein resides in the cytoplasm. Its subcellular location is the nucleus. Has a role in meiosis. This is an uncharacterized protein from Schizosaccharomyces pombe (strain 972 / ATCC 24843) (Fission yeast).